Consider the following 162-residue polypeptide: Phycoerythrocyanin alpha chain (162 aa).

Residue Cys84 participates in (15Z)-phycoviolobilin binding.

It belongs to the phycobiliprotein family. As to quaternary structure, heterodimer of an alpha and a beta chain. In terms of processing, contains one covalently linked bilin chromophore.

It localises to the cellular thylakoid membrane. Its function is as follows. Light-harvesting photosynthetic bile pigment-protein from the phycobiliprotein complex. In Nostoc sp. (strain PCC 7120 / SAG 25.82 / UTEX 2576), this protein is Phycoerythrocyanin alpha chain (pecA).